The primary structure comprises 337 residues: Glucokinase (337 aa).

ATP is bound at residue 11–16 (ADIGGT).

This sequence belongs to the bacterial glucokinase family.

The protein localises to the cytoplasm. It catalyses the reaction D-glucose + ATP = D-glucose 6-phosphate + ADP + H(+). This chain is Glucokinase, found in Xylella fastidiosa (strain M12).